A 665-amino-acid polypeptide reads, in one-letter code: Methionine--tRNA ligase (665 aa).

The 'HIGH' region signature appears at 12-22 (YYPSGKLHIGS). The 'KMSKS' region motif lies at 308-312 (KMSKS). Residue K311 coordinates ATP. The tRNA-binding domain occupies 562–665 (TFDAVEIRVA…SSVPNGSIIG (104 aa)).

This sequence belongs to the class-I aminoacyl-tRNA synthetase family. MetG type 2B subfamily. In terms of assembly, homodimer.

It is found in the cytoplasm. It carries out the reaction tRNA(Met) + L-methionine + ATP = L-methionyl-tRNA(Met) + AMP + diphosphate. Functionally, is required not only for elongation of protein synthesis but also for the initiation of all mRNA translation through initiator tRNA(fMet) aminoacylation. The chain is Methionine--tRNA ligase (metG) from Streptococcus pyogenes serotype M3 (strain SSI-1).